Reading from the N-terminus, the 128-residue chain is Modulator protein MzrA (128 aa).

Over 1–11 (MMVMKRPSLRQ) the chain is Cytoplasmic. The helical transmembrane segment at 12–32 (FSWLLGGSLLLGALFWLWLAV) threads the bilayer. Over 33-128 (QQQEATLAIR…RLRDAPHRLG (96 aa)) the chain is Periplasmic.

It belongs to the MzrA family. Interacts with EnvZ.

Its subcellular location is the cell inner membrane. Its function is as follows. Modulates the activity of the EnvZ/OmpR two-component regulatory system, probably by directly modulating EnvZ enzymatic activity and increasing stability of phosphorylated OmpR. The protein is Modulator protein MzrA of Klebsiella pneumoniae subsp. pneumoniae (strain ATCC 700721 / MGH 78578).